The following is a 286-amino-acid chain: L-rhamnose-binding lectin CSL1 (286 aa).

2 SUEL-type lectin domains span residues 96-186 and 193-280; these read TTCE…YICL and TCEG…YTCL.

In terms of biological role, L-rhamnose binding lectin. Has hemagglutinating activity towards rabbit erythrocytes, but not human type B erythrocytes. Hemagglutinating activity is inhibited by smooth-type lipopolysaccharide (LPS) from K.pneumoniae, E.coli K-235, S.flexneri 1A, A.salmonicida and S.minnesota and rough-type LPS from S.flexneri, but not by rough-type LPS from E.coli K12 and E.coli EH100. Agglutinates E.coli K12 and B.subtilis. The chain is L-rhamnose-binding lectin CSL1 from Oncorhynchus keta (Chum salmon).